The following is a 389-amino-acid chain: Succinate--CoA ligase [ADP-forming] subunit beta (389 aa).

The region spanning 9 to 244 (KQLFEHYGLP…LTQNDAREAE (236 aa)) is the ATP-grasp domain. Residues Lys-46, 53–55 (GRG), Glu-99, Cys-102, and Glu-107 each bind ATP. Mg(2+)-binding residues include Asn-199 and Asp-213. Substrate is bound by residues Asn-264 and 321–323 (GIV).

Belongs to the succinate/malate CoA ligase beta subunit family. As to quaternary structure, heterotetramer of two alpha and two beta subunits. Requires Mg(2+) as cofactor.

The enzyme catalyses succinate + ATP + CoA = succinyl-CoA + ADP + phosphate. It carries out the reaction GTP + succinate + CoA = succinyl-CoA + GDP + phosphate. Its pathway is carbohydrate metabolism; tricarboxylic acid cycle; succinate from succinyl-CoA (ligase route): step 1/1. Its function is as follows. Succinyl-CoA synthetase functions in the citric acid cycle (TCA), coupling the hydrolysis of succinyl-CoA to the synthesis of either ATP or GTP and thus represents the only step of substrate-level phosphorylation in the TCA. The beta subunit provides nucleotide specificity of the enzyme and binds the substrate succinate, while the binding sites for coenzyme A and phosphate are found in the alpha subunit. The chain is Succinate--CoA ligase [ADP-forming] subunit beta from Haemophilus influenzae (strain ATCC 51907 / DSM 11121 / KW20 / Rd).